A 205-amino-acid chain; its full sequence is Lymphotoxin-alpha (205 aa).

An N-terminal signal peptide occupies residues 1 to 34 (MTPPGRLYLPRVRGTRLLFLLLGLLLALPPRAKG). The THD domain maps to 63–205 (PAAHLVGDPS…SSVFFGAFAL (143 aa)). An N-linked (GlcNAc...) asparagine glycan is attached at asparagine 96. Residues cysteine 120 and cysteine 156 are joined by a disulfide bond.

This sequence belongs to the tumor necrosis factor family. In terms of assembly, homotrimer, and heterotrimer of either two LTB and one LTA subunits or (less prevalent) two LTA and one LTB subunits. Interacts with TNFRSF14.

It is found in the secreted. Its subcellular location is the membrane. In terms of biological role, cytokine that in its homotrimeric form binds to TNFRSF1A/TNFR1, TNFRSF1B/TNFBR and TNFRSF14/HVEM. In its heterotrimeric form with LTB binds to TNFRSF3/LTBR. Lymphotoxin is produced by lymphocytes and is cytotoxic for a wide range of tumor cells in vitro and in vivo. The protein is Lymphotoxin-alpha (LTA) of Marmota monax (Woodchuck).